Consider the following 134-residue polypeptide: Iron-sulfur cluster insertion protein ErpA (134 aa).

Iron-sulfur cluster is bound by residues Cys-47, Cys-126, and Cys-128.

It belongs to the HesB/IscA family. As to quaternary structure, homodimer. The cofactor is iron-sulfur cluster.

Functionally, required for insertion of 4Fe-4S clusters for at least IspG. The sequence is that of Iron-sulfur cluster insertion protein ErpA from Coxiella burnetii (strain Dugway 5J108-111).